An 82-amino-acid chain; its full sequence is Small ribosomal subunit protein bS16 (82 aa).

The protein belongs to the bacterial ribosomal protein bS16 family.

This chain is Small ribosomal subunit protein bS16, found in Aliivibrio fischeri (strain ATCC 700601 / ES114) (Vibrio fischeri).